A 211-amino-acid polypeptide reads, in one-letter code: Ribosomal RNA large subunit methyltransferase E (211 aa).

Residues Gly-60, Trp-62, Asp-85, Asp-101, and Asp-126 each contribute to the S-adenosyl-L-methionine site. Lys-166 acts as the Proton acceptor in catalysis.

This sequence belongs to the class I-like SAM-binding methyltransferase superfamily. RNA methyltransferase RlmE family.

Its subcellular location is the cytoplasm. It carries out the reaction uridine(2552) in 23S rRNA + S-adenosyl-L-methionine = 2'-O-methyluridine(2552) in 23S rRNA + S-adenosyl-L-homocysteine + H(+). Specifically methylates the uridine in position 2552 of 23S rRNA at the 2'-O position of the ribose in the fully assembled 50S ribosomal subunit. This chain is Ribosomal RNA large subunit methyltransferase E, found in Bordetella petrii (strain ATCC BAA-461 / DSM 12804 / CCUG 43448).